We begin with the raw amino-acid sequence, 103 residues long: Putative membrane protein insertion efficiency factor (103 aa).

This sequence belongs to the UPF0161 family.

It is found in the cell membrane. Its function is as follows. Could be involved in insertion of integral membrane proteins into the membrane. This Clavibacter michiganensis subsp. michiganensis (strain NCPPB 382) protein is Putative membrane protein insertion efficiency factor.